The chain runs to 190 residues: Sec-independent protein translocase protein TatB (190 aa).

The helical transmembrane segment at 2–22 (LPDIGGTELLVIAAVALIVVG) threads the bilayer. Residues 130–190 (IVSKPARKPP…KASTNSDITS (61 aa)) form a disordered region. A compositionally biased stretch (basic residues) spans 134–144 (PARKPPAKKAA). A compositionally biased stretch (low complexity) spans 145 to 163 (AKPAAKAELVSKPKASAKA).

It belongs to the TatB family. In terms of assembly, the Tat system comprises two distinct complexes: a TatABC complex, containing multiple copies of TatA, TatB and TatC subunits, and a separate TatA complex, containing only TatA subunits. Substrates initially bind to the TatABC complex, which probably triggers association of the separate TatA complex to form the active translocon.

It localises to the cell inner membrane. In terms of biological role, part of the twin-arginine translocation (Tat) system that transports large folded proteins containing a characteristic twin-arginine motif in their signal peptide across membranes. Together with TatC, TatB is part of a receptor directly interacting with Tat signal peptides. TatB may form an oligomeric binding site that transiently accommodates folded Tat precursor proteins before their translocation. This is Sec-independent protein translocase protein TatB from Caulobacter sp. (strain K31).